The primary structure comprises 1209 residues: Pre-mRNA-splicing factor rse1 (1209 aa).

Belongs to the RSE1 family. As to quaternary structure, associated with the spliceosome.

The protein localises to the nucleus. Its function is as follows. Involved in pre-mRNA splicing and cell cycle control. This Neurospora crassa (strain ATCC 24698 / 74-OR23-1A / CBS 708.71 / DSM 1257 / FGSC 987) protein is Pre-mRNA-splicing factor rse1 (msp-5).